A 235-amino-acid chain; its full sequence is Large ribosomal subunit protein uL1 (235 aa).

This sequence belongs to the universal ribosomal protein uL1 family. In terms of assembly, part of the 50S ribosomal subunit.

In terms of biological role, binds directly to 23S rRNA. The L1 stalk is quite mobile in the ribosome, and is involved in E site tRNA release. Protein L1 is also a translational repressor protein, it controls the translation of the L11 operon by binding to its mRNA. The protein is Large ribosomal subunit protein uL1 of Synechococcus sp. (strain CC9902).